Reading from the N-terminus, the 514-residue chain is Polygalacturonase (514 aa).

Residues 1–22 (MGMKFMAAVAFLALQLIVMAAA) form the signal peptide. A propeptide spanning residues 23-50 (EDQSAQIMLDSDIEQYLRSNRSLKKLVH) is cleaved from the precursor. PbH1 repeat units follow at residues 214-240 (CEGV…DIFA), 241-262 (SKRF…AIGT), 264-284 (SSNI…SIGS), 294-315 (VSHV…RIKT), 323-344 (ASYI…LINQ), and 357-384 (RSAV…QLMC). Aspartate 255 functions as the Proton donor in the catalytic mechanism. A glycan (N-linked (GlcNAc...) asparagine) is linked at asparagine 266. The active site involves histidine 278. An N-linked (GlcNAc...) asparagine glycan is attached at asparagine 397.

It belongs to the glycosyl hydrolase 28 family.

It is found in the secreted. The protein localises to the cell wall. It catalyses the reaction (1,4-alpha-D-galacturonosyl)n+m + H2O = (1,4-alpha-D-galacturonosyl)n + (1,4-alpha-D-galacturonosyl)m.. This chain is Polygalacturonase, found in Chamaecyparis obtusa (Hinoki false-cypress).